The chain runs to 91 residues: MALLKFFISKKEITSDIAKERLQIIVSEQRKNSKEPNYLPMLKKDLIKVIKKYINLNSETLCVKLDHKNKKNIKIFELNIVFPEKNFLNKK.

The protein belongs to the MinE family.

Functionally, prevents the cell division inhibition by proteins MinC and MinD at internal division sites while permitting inhibition at polar sites. This ensures cell division at the proper site by restricting the formation of a division septum at the midpoint of the long axis of the cell. This Wigglesworthia glossinidia brevipalpis protein is Cell division topological specificity factor.